Consider the following 79-residue polypeptide: Moronecidin (79 aa).

The first 22 residues, 1-22, serve as a signal peptide directing secretion; that stretch reads MKCATLFLVLSMVVLMAEPGDA. Gly-44 is modified (glycine amide). Residues 45 to 79 form a disordered region; sequence GKAEQDQQDQQYQQEQQEQQAQQYQRFNRERAAFD. Residues 47 to 79 constitute a propeptide that is removed on maturation; sequence AEQDQQDQQYQQEQQEQQAQQYQRFNRERAAFD. A compositionally biased stretch (low complexity) spans 52 to 69; that stretch reads QDQQYQQEQQEQQAQQYQ.

In terms of tissue distribution, expressed in mast cells in gill, skin and gut, and in lining blood vessels in the viscera. Also in intestine, spleen, anterior kidney, and blood cells.

The protein localises to the secreted. Antimicrobial peptide with broad-spectrum activity against Gram-positive and Gram-negative bacteria as well as against a variety of fungi. Rapidly inactivates channel catfish herpesvirus (ED(50)=4 uM) and frog virus 3 (ED(50)=13 uM) over a wide temperature range. Seems to disrupt the membranes by adopting an alpha helical conformation and forming toroidal pores. Has hemolytic activity. The polypeptide is Moronecidin (Morone saxatilis (Striped bass)).